The following is a 162-amino-acid chain: MVKLYAILRIRGQSDTPPDVEYTLKLLRLHKKYHLVIYPAEQPGLEGMLEKVKDWVTWGEINKPTLVKLFKARGRASGGIRITDEYIAKVFAEQGIKDIEGFAEALLEGKLVLHKLENIVKPVFRLHPPRGGFDGSSKKPFNMKGELGYRGEKINELIERML.

This sequence belongs to the universal ribosomal protein uL30 family. In terms of assembly, part of the 50S ribosomal subunit.

In Desulfurococcus amylolyticus (strain DSM 18924 / JCM 16383 / VKM B-2413 / 1221n) (Desulfurococcus kamchatkensis), this protein is Large ribosomal subunit protein uL30.